The chain runs to 894 residues: Exocyst complex component 1 (894 aa).

Coiled coils occupy residues 152 to 199 and 205 to 259; these read GDEE…LQVL and QSIM…NHLI. A disordered region spans residues 437–495; it reads SKESKKFATLPRKESAVKQETESLHGSSGKLTGSTSSLNKLSVQSSGSRRSQSSSLLDM. A compositionally biased stretch (basic and acidic residues) spans 438 to 459; it reads KESKKFATLPRKESAVKQETES. Residues 460–491 are compositionally biased toward low complexity; that stretch reads LHGSSGKLTGSTSSLNKLSVQSSGSRRSQSSS. Serine 470 is subject to Phosphoserine. Threonine 471 carries the post-translational modification Phosphothreonine. Residues serine 473, serine 487, and serine 501 each carry the phosphoserine modification.

The protein belongs to the SEC3 family. In terms of assembly, the exocyst complex is composed of EXOC1, EXOC2, EXOC3, EXOC4, EXOC5, EXOC6, EXOC7 and EXOC8. Interacts with EEF1A1. Interacts with SLC6A9; interaction increases the transporter capacity of SLC6A9 probably by promoting its insertion into the cell membrane.

The protein localises to the midbody. Its subcellular location is the midbody ring. The protein resides in the cytoplasm. It localises to the perinuclear region. It is found in the cell membrane. Functionally, component of the exocyst complex involved in the docking of exocytic vesicles with fusion sites on the plasma membrane. The protein is Exocyst complex component 1 (Exoc1) of Mus musculus (Mouse).